The chain runs to 200 residues: MMLFGKISQQLCGLKKLPWSRDSRYFWGWLNAVFNKVDHDRIRDVGPDRAASEWLLRCGAMVRYHGQQRWQKDYNHLPTGPLDKYKIQAIDATDSCIMSIGFDHMEGLQYVEKIRLCKCHYIEDGCLERLSQLENLQKSMLEMEIISCGNVTDKGIIALHHFRNLKYLFLSDLPGVKEKEKIVQAFKTSLPSLELKLDLK.

The transit peptide at 1–25 (MMLFGKISQQLCGLKKLPWSRDSRY) directs the protein to the mitochondrion. The tract at residues 1–61 (MMLFGKISQQ…SEWLLRCGAM (61 aa)) is N-terminal domain. Glycine 59 contributes to the Mg(2+) binding site. LRR repeat units lie at residues 62–87 (VRYH…KYKI), 88–116 (QAID…KIRL), 117–141 (CKCH…KSML), and 142–173 (EMEI…LSDL). A Mg(2+)-binding site is contributed by threonine 93.

This sequence belongs to the ATP synthase subunit s family. As to quaternary structure, homotetramer. Associates with ATP synthase.

The protein resides in the mitochondrion. It localises to the mitochondrion inner membrane. Involved in regulation of mitochondrial membrane ATP synthase. Necessary for H(+) conduction of ATP synthase. Facilitates energy-driven catalysis of ATP synthesis by blocking a proton leak through an alternative proton exit pathway. The sequence is that of ATP synthase subunit s, mitochondrial (DMAC2L) from Bos taurus (Bovine).